Here is an 805-residue protein sequence, read N- to C-terminus: Acetyl-CoA decarbonylase/synthase complex subunit alpha 3 (805 aa).

6 residues coordinate [4Fe-4S] cluster: Cys-72, Cys-75, Cys-76, Cys-78, Cys-83, and Cys-93. His-116 serves as a coordination point for CO. Positions 249, 277, and 322 each coordinate [Ni-4Fe-4S] cluster. 2 consecutive 4Fe-4S ferredoxin-type domains span residues 407-435 and 445-474; these read EEFK…IPEA and EYLE…LNVL. Residues Cys-416, Cys-419, Cys-422, Cys-426, Cys-454, Cys-457, Cys-460, and Cys-464 each contribute to the [4Fe-4S] cluster site. [Ni-4Fe-4S] cluster is bound by residues Cys-522, Cys-551, and Cys-586.

Belongs to the Ni-containing carbon monoxide dehydrogenase family. In terms of assembly, heterotetramer of two alpha and two epsilon subunits. The ACDS complex is made up of alpha, epsilon, beta, gamma and delta subunits with a probable stoichiometry of (alpha(2)epsilon(2))(4)-beta(8)-(gamma(1)delta(1))(8). The cofactor is [4Fe-4S] cluster. [Ni-4Fe-4S] cluster serves as cofactor.

It carries out the reaction CO + 2 oxidized [2Fe-2S]-[ferredoxin] + H2O = 2 reduced [2Fe-2S]-[ferredoxin] + CO2 + 2 H(+). The protein operates within one-carbon metabolism; methanogenesis from acetate. Its function is as follows. Part of the ACDS complex that catalyzes the reversible cleavage of acetyl-CoA, allowing growth on acetate as sole source of carbon and energy. The alpha-epsilon subcomponent functions as a carbon monoxide dehydrogenase. The polypeptide is Acetyl-CoA decarbonylase/synthase complex subunit alpha 3 (Methanosarcina acetivorans (strain ATCC 35395 / DSM 2834 / JCM 12185 / C2A)).